Reading from the N-terminus, the 377-residue chain is Apelin receptor (377 aa).

Over 1-28 (MEDDGYNYYGADNQSECDYADWTPSGAL) the chain is Extracellular. N-linked (GlcNAc...) asparagine glycosylation occurs at Asn13. Intrachain disulfides connect Cys17/Cys279 and Cys100/Cys179. The helical transmembrane segment at 29–52 (IPAIYILVFLLGTTGNGLVLWTVF) threads the bilayer. The Cytoplasmic segment spans residues 53 to 62 (WSSREKRRSA). Residues 63–84 (DIFIASLAVADLTFVVTLPLWA) form a helical membrane-spanning segment. At 85–97 (TYTYREFDWPFGT) the chain is on the extracellular side. The helical transmembrane segment at 98–123 (FSCKLSSYLIFVNMYASVFCLTGLSF) threads the bilayer. At 124–144 (DRYLAIVRPVANARLRLRVSG) the chain is on the cytoplasmic side. The chain crosses the membrane as a helical span at residues 145–162 (AVATAVLWVLAALLAVPV). Topologically, residues 163–196 (MVFRSTDIPENSTKTQCYMDYSMVATSNSEWAWE) are extracellular. Residue Asn173 is glycosylated (N-linked (GlcNAc...) asparagine). A helical transmembrane segment spans residues 197-221 (VGLGVSSTAVGFVVPFIIMLTCYFF). The Cytoplasmic portion of the chain corresponds to 222 to 244 (IAQTIAGHFRKERIEGLRKRRRL). Residues 245–268 (LSIIVVLVVTFALCWMPYHLVKTL) form a helical membrane-spanning segment. Over 269 to 287 (YMLGNLLHWPCDFDSFLMN) the chain is Extracellular. A helical membrane pass occupies residues 288 to 310 (VFPYCTCISYVNSCLNPFLYAFF). Topologically, residues 311–377 (DPRFRRACTS…IPYSQETLVD (67 aa)) are cytoplasmic. A compositionally biased stretch (low complexity) spans 335 to 349 (SSSAEKSASYSSGHS). The tract at residues 335–377 (SSSAEKSASYSSGHSQGPGPNMCKGGEPMHEKSIPYSQETLVD) is disordered.

Belongs to the G-protein coupled receptor 1 family. As to quaternary structure, homodimer; dimerization inhibits APLNR-mediated G protein and beta-arrestin signaling pathways compared to monomeric APLNR. In terms of tissue distribution, widely expressed. Highest expression in the lung, lower in the heart, placenta, ovary, skeletal muscle, mammary gland, kidney and several structures in the brain as the hypothalamus (supraoptic and periventricular nuclei), pituitary, olfactory bulb and pineal gland.

It is found in the cell membrane. G protein-coupled receptor for peptide hormones apelin (APLN) and apelin receptor early endogenous ligand (APELA/ELA), that plays a role in the regulation of normal cardiovascular function and fluid homeostasis. When acting as apelin receptor, activates both G(i) protein pathway that inhibits adenylate cyclase activity, and the beta-arrestin pathway that promotes internalization of the receptor. APLNR/APJ also functions as mechanoreceptor that is activated by pathological stimuli in a G-protein-independent fashion to induce beta-arrestin signaling, hence eliciting cardiac hypertrophy. However, the presence of apelin ligand blunts cardiac hypertrophic induction from APLNR/APJ on response to pathological stimuli. Plays a key role in early development such as gastrulation, blood vessels formation and heart morphogenesis by acting as a APELA receptor. May promote angioblast migration toward the embryonic midline, i.e. the position of the future vessel formation, during vasculogenesis. Promotes sinus venosus (SV)-derived endothelial cells migration into the developing heart to promote coronary blood vessel development. Also plays a role in various processes in adults such as regulation of blood vessel formation, blood pressure, heart contractility and heart failure. This is Apelin receptor from Rattus norvegicus (Rat).